The primary structure comprises 539 residues: Acid-sensing ion channel 4 (539 aa).

The Cytoplasmic portion of the chain corresponds to 1 to 68 (MPIEIVCKIK…GPGPHGLRRT (68 aa)). The helical transmembrane segment at 69–89 (LWVLALLTSLAAFLYQAASLA) threads the bilayer. Over 90–438 (RGYLTRPHLV…EQRAAYGLSA (349 aa)) the chain is Extracellular. Disulfide bonds link C118–C202 and C180–C187. N191, N243, N341, and N376 each carry an N-linked (GlcNAc...) asparagine glycan. 5 disulfides stabilise this stretch: C296–C375, C318–C371, C322–C369, C331–C353, and C333–C345. The chain crosses the membrane as a helical span at residues 439-459 (LLGDLGGQMGLFIGASILTLL). The GAS motif; ion selectivity filter signature appears at 452 to 454 (GAS). Residues 460-539 (EILDYIYEVS…PGSLFEDFAC (80 aa)) lie on the Cytoplasmic side of the membrane. The disordered stretch occupies residues 501-531 (EQSPCPNRGRAEGGGASNLLPNHHHPHGPPG).

This sequence belongs to the amiloride-sensitive sodium channel (TC 1.A.6) family. ASIC4 subfamily. Homotrimer. Heterotrimer; with other ASIC proteins producing functional channels. As to expression, expressed in brain, spinal cord and dorsal root ganglion (DRG). Expressed by a subset of sensory neurons in the DRG. Expressed by granule cells in the cerebellar cortex. In hippocampus, expression is detected in dentate gyrus granule cells, in pyramidal cells of CA1-CA3 subfields and in interneurons of the striatum oriens and radiatum of all subfields. In cerebral cortex expressed in small, medium and large pyramidal cells in layers 2, 3 and 5 respectively. Also expressed in striatum, globus pallidus, inferior and superior calliculi, amygdala, magnocellular preoptic nucleus, islands of Calleja and large neurons of olfactory tubercules.

It is found in the cell membrane. Functionally, does not exhibit measurable stand-alone pH-gated sodium channel activity but may form pH-gated heterotrimeric sodium channels. Its activity could also depend on alternative gating mechanisms. The chain is Acid-sensing ion channel 4 from Rattus norvegicus (Rat).